We begin with the raw amino-acid sequence, 188 residues long: MQLVVARIGRAHGIKGEVTVEVRTDEPELRLGPGAVLATDPASTGPLTIESGRVHSGRLLLRFAGVHDRTGAEALRNTLLIADVDPDERPEDEDEYYDHQLIDLDVVTEDGTEVGRITEISHLPTQDLFVVERPDGSEVYVPFVSEIVTGIDLDAQRAVIDPPPGLIDDRAEIASARDAGAEDAGDEA.

The PRC barrel domain maps to 93 to 166 (EDEYYDHQLI…RAVIDPPPGL (74 aa)).

The protein belongs to the RimM family. As to quaternary structure, binds ribosomal protein uS19.

It is found in the cytoplasm. An accessory protein needed during the final step in the assembly of 30S ribosomal subunit, possibly for assembly of the head region. Essential for efficient processing of 16S rRNA. May be needed both before and after RbfA during the maturation of 16S rRNA. It has affinity for free ribosomal 30S subunits but not for 70S ribosomes. This chain is Ribosome maturation factor RimM, found in Streptomyces coelicolor (strain ATCC BAA-471 / A3(2) / M145).